The sequence spans 103 residues: Putative defensin-like protein 305 (103 aa).

The N-terminal stretch at 1-31 (MREEILEIFLLVNFVFILCTSIMVRIRYVSC) is a signal peptide. 3 disulfides stabilise this stretch: cysteine 31–cysteine 51, cysteine 37–cysteine 56, and cysteine 42–cysteine 58.

This sequence belongs to the DEFL family.

It is found in the secreted. The polypeptide is Putative defensin-like protein 305 (Arabidopsis thaliana (Mouse-ear cress)).